The following is a 130-amino-acid chain: Small ribosomal subunit protein uS9 (130 aa).

This sequence belongs to the universal ribosomal protein uS9 family.

This is Small ribosomal subunit protein uS9 from Nitratidesulfovibrio vulgaris (strain ATCC 29579 / DSM 644 / CCUG 34227 / NCIMB 8303 / VKM B-1760 / Hildenborough) (Desulfovibrio vulgaris).